Here is a 57-residue protein sequence, read N- to C-terminus: COP9 signalosome complex subunit 9 (57 aa).

Thr-26 bears the Phosphothreonine mark.

The protein belongs to the CSN9 family. Component of the CSN complex, composed of COPS1/GPS1, COPS2, COPS3, COPS4, COPS5, COPS6, COPS7 (COPS7A or COPS7B), COPS8 and COPS9. In the complex, it interacts directly with COPS3, COPS5 and COPS6.

Its subcellular location is the nucleus. The protein localises to the cytoplasm. The protein resides in the nucleoplasm. In terms of biological role, component of the COP9 signalosome complex (CSN), a complex involved in various cellular and developmental processes. The CSN complex is an essential regulator of the ubiquitin (Ubl) conjugation pathway by mediating the deneddylation of the cullin subunits of SCF-type E3 ligase complexes, leading to decrease the Ubl ligase activity of SCF-type complexes such as SCF, CSA or DDB2. The complex is also involved in phosphorylation of p53/TP53, c-jun/JUN, IkappaBalpha/NFKBIA, ITPK1 and IRF8/ICSBP, possibly via its association with CK2 and PKD kinases. CSN-dependent phosphorylation of TP53 and JUN promotes and protects degradation by the Ubl system, respectively. Plays a role in cell proliferation. This is COP9 signalosome complex subunit 9 from Bos taurus (Bovine).